We begin with the raw amino-acid sequence, 491 residues long: Ketol-acid reductoisomerase (NADP(+)) (491 aa).

Residues 15-208 (AQLGTCRFME…GGHRAGVLES (194 aa)) enclose the KARI N-terminal Rossmann domain. NADP(+) contacts are provided by residues 45 to 48 (CGAQ), arginine 68, arginine 76, serine 78, and 108 to 110 (DKQ). Histidine 132 is an active-site residue. NADP(+) is bound at residue glycine 158. 2 consecutive KARI C-terminal knotted domains span residues 209–353 (SFVA…KEQE) and 354–486 (YFDK…MTAM). Residues aspartate 217, glutamate 221, glutamate 389, and glutamate 393 each coordinate Mg(2+). Serine 414 is a binding site for substrate.

The protein belongs to the ketol-acid reductoisomerase family. Mg(2+) is required as a cofactor.

The enzyme catalyses (2R)-2,3-dihydroxy-3-methylbutanoate + NADP(+) = (2S)-2-acetolactate + NADPH + H(+). It catalyses the reaction (2R,3R)-2,3-dihydroxy-3-methylpentanoate + NADP(+) = (S)-2-ethyl-2-hydroxy-3-oxobutanoate + NADPH + H(+). The protein operates within amino-acid biosynthesis; L-isoleucine biosynthesis; L-isoleucine from 2-oxobutanoate: step 2/4. It participates in amino-acid biosynthesis; L-valine biosynthesis; L-valine from pyruvate: step 2/4. Functionally, involved in the biosynthesis of branched-chain amino acids (BCAA). Catalyzes an alkyl-migration followed by a ketol-acid reduction of (S)-2-acetolactate (S2AL) to yield (R)-2,3-dihydroxy-isovalerate. In the isomerase reaction, S2AL is rearranged via a Mg-dependent methyl migration to produce 3-hydroxy-3-methyl-2-ketobutyrate (HMKB). In the reductase reaction, this 2-ketoacid undergoes a metal-dependent reduction by NADPH to yield (R)-2,3-dihydroxy-isovalerate. The sequence is that of Ketol-acid reductoisomerase (NADP(+)) from Christiangramia forsetii (strain DSM 17595 / CGMCC 1.15422 / KT0803) (Gramella forsetii).